The following is a 397-amino-acid chain: Elongation factor Tu 1 (397 aa).

Positions 10–207 constitute a tr-type G domain; the sequence is KPHVNVGTIG…TLDSYIPEPV (198 aa). The interval 19 to 26 is G1; sequence GHVDHGKT. 19 to 26 provides a ligand contact to GTP; the sequence is GHVDHGKT. Threonine 26 serves as a coordination point for Mg(2+). The tract at residues 60–64 is G2; the sequence is GITIN. Residues 81–84 are G3; that stretch reads DCPG. Residues 81–85 and 136–139 each bind GTP; these read DCPGH and NKAD. The interval 136–139 is G4; sequence NKAD. The interval 174-176 is G5; that stretch reads SAL.

This sequence belongs to the TRAFAC class translation factor GTPase superfamily. Classic translation factor GTPase family. EF-Tu/EF-1A subfamily. As to quaternary structure, monomer.

Its subcellular location is the cytoplasm. The enzyme catalyses GTP + H2O = GDP + phosphate + H(+). In terms of biological role, GTP hydrolase that promotes the GTP-dependent binding of aminoacyl-tRNA to the A-site of ribosomes during protein biosynthesis. The polypeptide is Elongation factor Tu 1 (Stutzerimonas stutzeri (strain A1501) (Pseudomonas stutzeri)).